We begin with the raw amino-acid sequence, 180 residues long: Glycodelin (180 aa).

A signal peptide spans 1-18; that stretch reads MLCLLLTLGVALVCGVPA. Residues Asn-46 and Asn-81 are each glycosylated (N-linked (GlcNAc...) (complex) asparagine). 2 cysteine pairs are disulfide-bonded: Cys-84–Cys-178 and Cys-124–Cys-137.

The protein belongs to the calycin superfamily. Lipocalin family. In terms of assembly, homodimer. Post-translationally, four distinct glycoforms A, C, F and S arise from different N-linked oligosaccharide chains at amino acid residues Asn-46 and Asn-81. Glycodelin-A and -F are taken up by the cumulus cells in which partial deglycosylation takes place to produce glycodelin-C. In terms of tissue distribution, this protein is, the main protein synthesized and secreted in the endometrium from mid-luteal phase of the menstrual cycle and during the first semester of pregnancy. Glycodelin-A is expressed in amniotic fluid, endometrium/decidua and maternal serum (at protein level). Glycodelin-F is expressed in follicular fluid, luteinized granulosa cells and the oviduct (at protein level). Glycodelin-S is expressed in seminal plasma and seminal vesicles (at protein level). Glycodelin-C is detected in cumulus cells (at protein level), but cumulus cells do not synthesize Glycodelin-C but take up and convert glycodelin-A and -F vis glycan remodeling.

The protein resides in the secreted. Its function is as follows. Glycoprotein that regulates critical steps during fertilization and also has immunomonomodulatory effects. Four glycoforms, namely glycodelin-S, -A, -F and -C have been identified in reproductive tissues that differ in glycosylation and biological activity. Glycodelin-A has contraceptive and immunosuppressive activities. Glycodelin-C stimulates binding of spermatozoa to the zona pellucida. Glycodelin-F inhibits spermatozoa-zona pellucida binding and significantly suppresses progesterone-induced acrosome reaction of spermatozoa. Glycodelin-S in seminal plasma maintains the uncapacitated state of human spermatozoa. This chain is Glycodelin (PAEP), found in Homo sapiens (Human).